Consider the following 435-residue polypeptide: GTPase Der (435 aa).

EngA-type G domains are found at residues 4–167 (PVVA…PAEK) and 175–350 (ISFS…DNQN). Residues 10 to 17 (GQPNVGKS), 57 to 61 (DTGGI), 119 to 122 (NKAD), 181 to 188 (GRPNVGKS), 228 to 232 (DTAGI), and 293 to 296 (NKWD) contribute to the GTP site. The KH-like domain occupies 351–435 (QRIQSSVLND…PIKILPRKRK (85 aa)).

This sequence belongs to the TRAFAC class TrmE-Era-EngA-EngB-Septin-like GTPase superfamily. EngA (Der) GTPase family. Associates with the 50S ribosomal subunit.

Its function is as follows. GTPase that plays an essential role in the late steps of ribosome biogenesis. This Lactobacillus helveticus (strain DPC 4571) protein is GTPase Der.